We begin with the raw amino-acid sequence, 73 residues long: Methionyl-tRNA formyltransferase (73 aa).

Belongs to the Fmt family.

It carries out the reaction L-methionyl-tRNA(fMet) + (6R)-10-formyltetrahydrofolate = N-formyl-L-methionyl-tRNA(fMet) + (6S)-5,6,7,8-tetrahydrofolate + H(+). Its function is as follows. Attaches a formyl group to the free amino group of methionyl-tRNA(fMet). The formyl group appears to play a dual role in the initiator identity of N-formylmethionyl-tRNA by promoting its recognition by IF2 and preventing the misappropriation of this tRNA by the elongation apparatus. The sequence is that of Methionyl-tRNA formyltransferase (fmt) from Rickettsia rickettsii.